The chain runs to 288 residues: Bifunctional protein FolD 2 (288 aa).

Residues 166 to 168 and serine 191 contribute to the NADP(+) site; that span reads GRS.

Belongs to the tetrahydrofolate dehydrogenase/cyclohydrolase family. In terms of assembly, homodimer.

The catalysed reaction is (6R)-5,10-methylene-5,6,7,8-tetrahydrofolate + NADP(+) = (6R)-5,10-methenyltetrahydrofolate + NADPH. The enzyme catalyses (6R)-5,10-methenyltetrahydrofolate + H2O = (6R)-10-formyltetrahydrofolate + H(+). The protein operates within one-carbon metabolism; tetrahydrofolate interconversion. Functionally, catalyzes the oxidation of 5,10-methylenetetrahydrofolate to 5,10-methenyltetrahydrofolate and then the hydrolysis of 5,10-methenyltetrahydrofolate to 10-formyltetrahydrofolate. In Myxococcus xanthus (strain DK1622), this protein is Bifunctional protein FolD 2.